Here is a 198-residue protein sequence, read N- to C-terminus: Probable GTP-binding protein EngB (198 aa).

Positions 22-195 (NRVEVAFVGR…IDNLFLEFAT (174 aa)) constitute an EngB-type G domain. GTP contacts are provided by residues 30–37 (GRSNVGKS), 57–61 (GKTRL), 75–78 (DLPG), 142–145 (TKSD), and 174–176 (FSS). The Mg(2+) site is built by S37 and T59.

The protein belongs to the TRAFAC class TrmE-Era-EngA-EngB-Septin-like GTPase superfamily. EngB GTPase family. It depends on Mg(2+) as a cofactor.

Functionally, necessary for normal cell division and for the maintenance of normal septation. The protein is Probable GTP-binding protein EngB of Clostridium beijerinckii (strain ATCC 51743 / NCIMB 8052) (Clostridium acetobutylicum).